We begin with the raw amino-acid sequence, 170 residues long: Crossover junction endodeoxyribonuclease RuvC (170 aa).

Catalysis depends on residues Asp11, Glu71, and Asp143. Mg(2+) is bound by residues Asp11, Glu71, and Asp143.

This sequence belongs to the RuvC family. In terms of assembly, homodimer which binds Holliday junction (HJ) DNA. The HJ becomes 2-fold symmetrical on binding to RuvC with unstacked arms; it has a different conformation from HJ DNA in complex with RuvA. In the full resolvosome a probable DNA-RuvA(4)-RuvB(12)-RuvC(2) complex forms which resolves the HJ. The cofactor is Mg(2+).

The protein localises to the cytoplasm. The enzyme catalyses Endonucleolytic cleavage at a junction such as a reciprocal single-stranded crossover between two homologous DNA duplexes (Holliday junction).. Functionally, the RuvA-RuvB-RuvC complex processes Holliday junction (HJ) DNA during genetic recombination and DNA repair. Endonuclease that resolves HJ intermediates. Cleaves cruciform DNA by making single-stranded nicks across the HJ at symmetrical positions within the homologous arms, yielding a 5'-phosphate and a 3'-hydroxyl group; requires a central core of homology in the junction. The consensus cleavage sequence is 5'-(A/T)TT(C/G)-3'. Cleavage occurs on the 3'-side of the TT dinucleotide at the point of strand exchange. HJ branch migration catalyzed by RuvA-RuvB allows RuvC to scan DNA until it finds its consensus sequence, where it cleaves and resolves the cruciform DNA. The protein is Crossover junction endodeoxyribonuclease RuvC of Rhizobium rhizogenes (strain K84 / ATCC BAA-868) (Agrobacterium radiobacter).